The sequence spans 410 residues: Peptidase T (410 aa).

Position 79 (H79) interacts with Zn(2+). D81 is an active-site residue. D142 provides a ligand contact to Zn(2+). The Proton acceptor role is filled by E176. 3 residues coordinate Zn(2+): E177, D199, and H381.

Belongs to the peptidase M20B family. It depends on Zn(2+) as a cofactor.

The protein localises to the cytoplasm. The catalysed reaction is Release of the N-terminal residue from a tripeptide.. Cleaves the N-terminal amino acid of tripeptides. This chain is Peptidase T, found in Listeria welshimeri serovar 6b (strain ATCC 35897 / DSM 20650 / CCUG 15529 / CIP 8149 / NCTC 11857 / SLCC 5334 / V8).